Here is a 465-residue protein sequence, read N- to C-terminus: NADH-quinone oxidoreductase subunit N (465 aa).

The next 13 helical transmembrane spans lie at 6–26, 30–50, 66–86, 98–118, 156–176, 194–214, 226–246, 261–281, 289–309, 317–337, 363–383, 391–411, and 432–452; these read ILPETFSIISSLVLLLLGIVF, TINLLALGCTVITLIILILSA, LYIRSAQGLILIAGILVLLLL, SILILFTLFGMITLVSANNLI, ALSSCIMLYGMSLLYGYTGLV, IVFGLVLILIGLCFKLAIAPF, PTIVTAFFSTVPKAALVTFLI, FQPVLLYISALSVLISAFGAL, LLAYSSIGHIGFILASLSIFT, LIYLVIYIITNIGLFSYFIQI, ILLFSMAGIPPLAGFFAKLFI, GFIGMSLIFIVASVISCYYYL, and SLFIVTSVASLINIVLFMCVE.

This sequence belongs to the complex I subunit 2 family. NDH-1 is composed of 14 different subunits. Subunits NuoA, H, J, K, L, M, N constitute the membrane sector of the complex.

It is found in the cell membrane. It carries out the reaction a quinone + NADH + 5 H(+)(in) = a quinol + NAD(+) + 4 H(+)(out). Functionally, NDH-1 shuttles electrons from NADH, via FMN and iron-sulfur (Fe-S) centers, to quinones in the respiratory chain. The immediate electron acceptor for the enzyme in this species is believed to be ubiquinone. Couples the redox reaction to proton translocation (for every two electrons transferred, four hydrogen ions are translocated across the cytoplasmic membrane), and thus conserves the redox energy in a proton gradient. The protein is NADH-quinone oxidoreductase subunit N of Wolbachia sp. subsp. Brugia malayi (strain TRS).